The sequence spans 358 residues: MDDAAVLRKKGYIVGINLGKGSYAKVKSAYSERLKFNVAVKIIDRKKTPTDFVERFLPREMDILATVNHRSIIKTYEIFETSDGRIYIVMELGVQGDLLEFIKCRGALHEDVARKMFRQLSSAVKYCHDLDVVHRDLKCENLLLDKDFNIKLSDFGFSKRCLRDGSGRIVLSKTFCGSAAYAAPEVLQGIPYQPKVYDIWSLGVILYIMVCGSMPYDDSDIKKMLRIQKEHRVDFPRSKNLTGECKDLIYRILQPDVNRRLHIDEILSHSWLQPPKPKAMSSASFKREGEGKYRADCKLDTRPGSRPEHRPDHKLATKPQQRMLVTPENEDRMEDRLAETSRAKDHHISGAEVEKAST.

Positions tyrosine 12–leucine 272 constitute a Protein kinase domain. ATP-binding positions include leucine 18–valine 26 and lysine 41. Residue aspartate 136 is the Proton acceptor of the active site. 2 stretches are compositionally biased toward basic and acidic residues: residues aspartate 296–leucine 315 and asparagine 329–threonine 358. Residues aspartate 296–threonine 358 are disordered.

Belongs to the protein kinase superfamily. CAMK Ser/Thr protein kinase family. As to quaternary structure, interacts with TSSK1B. Interacts with HSP90; this interaction stabilizes TSSK2. The cofactor is Mg(2+). Autophosphorylated. In terms of processing, ubiquitinated; HSP90 activity negatively regulates ubiquitination and degradation. As to expression, testis-specific. Expressed only in the spermatids postmeiotically at the final stages of cytodifferentiation in the seminiferous tubules (at protein level). Not detected in released sperms in the lumen of the seminiferous tubules. Also present in the epididymal sperm (at protein level).

It is found in the cytoplasm. It localises to the cytoskeleton. The protein localises to the microtubule organizing center. The protein resides in the centrosome. Its subcellular location is the centriole. It is found in the cytoplasmic vesicle. It localises to the secretory vesicle. The protein localises to the acrosome. The catalysed reaction is L-seryl-[protein] + ATP = O-phospho-L-seryl-[protein] + ADP + H(+). It carries out the reaction L-threonyl-[protein] + ATP = O-phospho-L-threonyl-[protein] + ADP + H(+). Its activity is regulated as follows. Activated by phosphorylation on Thr-174, potentially by autophosphorylation. Testis-specific serine/threonine-protein kinase required during spermatid development. Phosphorylates 'Ser-281' of TSKS and SPAG16. Involved in the late stages of spermatogenesis, during the reconstruction of the cytoplasm. During spermatogenesis, required for the transformation of a ring-shaped structure around the base of the flagellum originating from the chromatoid body. This chain is Testis-specific serine/threonine-protein kinase 2 (Tssk2), found in Mus musculus (Mouse).